Here is a 443-residue protein sequence, read N- to C-terminus: Tubulin beta chain (443 aa).

Residues glutamine 11, glutamate 69, serine 138, glycine 142, threonine 143, glycine 144, asparagine 204, and asparagine 226 each contribute to the GTP site. Residue glutamate 69 participates in Mg(2+) binding. Residues 424–443 (QYQDATAEEEGEFEEEEGEN) form a disordered region. Over residues 429–443 (TAEEEGEFEEEEGEN) the composition is skewed to acidic residues.

Belongs to the tubulin family. Dimer of alpha and beta chains. A typical microtubule is a hollow water-filled tube with an outer diameter of 25 nm and an inner diameter of 15 nM. Alpha-beta heterodimers associate head-to-tail to form protofilaments running lengthwise along the microtubule wall with the beta-tubulin subunit facing the microtubule plus end conferring a structural polarity. Microtubules usually have 13 protofilaments but different protofilament numbers can be found in some organisms and specialized cells. Requires Mg(2+) as cofactor.

It localises to the cytoplasm. The protein resides in the cytoskeleton. Its function is as follows. Tubulin is the major constituent of microtubules, a cylinder consisting of laterally associated linear protofilaments composed of alpha- and beta-tubulin heterodimers. Microtubules grow by the addition of GTP-tubulin dimers to the microtubule end, where a stabilizing cap forms. Below the cap, tubulin dimers are in GDP-bound state, owing to GTPase activity of alpha-tubulin. The protein is Tubulin beta chain (BETA-TT1) of Tetrahymena pyriformis.